The primary structure comprises 534 residues: Cytokinin dehydrogenase 5 (534 aa).

The first 20 residues, 1–20 (MAWCLVFMVFLIYCLISTVG), serve as a signal peptide directing secretion. The FAD-binding PCMH-type domain maps to 59–243 (TSAEPLAVFH…TRARIALEPA (185 aa)). Positions 93, 95, and 97 each coordinate FAD. Pros-8alpha-FAD histidine is present on His-98. FAD-binding residues include Ser-99 and Gln-103. A glycan (N-linked (GlcNAc...) asparagine) is linked at Asn-152. 5 residues coordinate FAD: Asp-167, Ser-172, Ser-178, Ile-182, and Ile-233. Asn-256 is a glycosylation site (N-linked (GlcNAc...) asparagine). FAD-binding residues include Tyr-484 and Gln-522.

Belongs to the oxygen-dependent FAD-linked oxidoreductase family. Monomer. The cofactor is FAD. Expressed in inflorescence meristems.

It is found in the secreted. The protein resides in the extracellular space. The enzyme catalyses N(6)-dimethylallyladenine + A + H2O = 3-methyl-2-butenal + adenine + AH2. In terms of biological role, catalyzes the oxidation of cytokinins, a family of N(6)-substituted adenine derivatives that are plant hormones, where the substituent is an isopentenyl group. This Oryza sativa subsp. japonica (Rice) protein is Cytokinin dehydrogenase 5 (CKX5).